We begin with the raw amino-acid sequence, 400 residues long: Phosphoglycerate kinase (400 aa).

Substrate is bound by residues 22-24 (DFN), R38, 61-64 (HLGR), R120, and R153. ATP contacts are provided by residues K206, G297, E328, and 354-357 (GGDT).

This sequence belongs to the phosphoglycerate kinase family. Monomer.

The protein localises to the cytoplasm. The catalysed reaction is (2R)-3-phosphoglycerate + ATP = (2R)-3-phospho-glyceroyl phosphate + ADP. The protein operates within carbohydrate degradation; glycolysis; pyruvate from D-glyceraldehyde 3-phosphate: step 2/5. In Campylobacter curvus (strain 525.92), this protein is Phosphoglycerate kinase.